Reading from the N-terminus, the 265-residue chain is Mlc titration factor A (265 aa).

The Zn(2+) site is built by His-111, His-148, His-152, and Glu-211.

This sequence belongs to the MtfA family. Interacts with Mlc. Zn(2+) is required as a cofactor.

The protein resides in the cytoplasm. In terms of biological role, involved in the modulation of the activity of the glucose-phosphotransferase system (glucose-PTS). Interacts with the transcriptional repressor Mlc, preventing its interaction with DNA and leading to the modulation of expression of genes regulated by Mlc, including ptsG, which encodes the PTS system glucose-specific EIICB component. Shows zinc-dependent metallopeptidase activity. The sequence is that of Mlc titration factor A from Shigella sonnei (strain Ss046).